The following is a 726-amino-acid chain: Catalase-peroxidase (726 aa).

Positions 93–216 (WHSAGTYRVH…LAAVQMGLIY (124 aa)) form a cross-link, tryptophyl-tyrosyl-methioninium (Trp-Tyr) (with M-242). Catalysis depends on His94, which acts as the Proton acceptor. Positions 216 to 242 (YVNPEGPNGNPDPVAAAVDIRETFTRM) form a cross-link, tryptophyl-tyrosyl-methioninium (Tyr-Met) (with W-93). His257 contacts heme b. Residues 471–490 (GSDKRGGANGARIRLSPQKD) are disordered.

This sequence belongs to the peroxidase family. Peroxidase/catalase subfamily. As to quaternary structure, homodimer or homotetramer. It depends on heme b as a cofactor. Post-translationally, formation of the three residue Trp-Tyr-Met cross-link is important for the catalase, but not the peroxidase activity of the enzyme.

It carries out the reaction H2O2 + AH2 = A + 2 H2O. The catalysed reaction is 2 H2O2 = O2 + 2 H2O. Bifunctional enzyme with both catalase and broad-spectrum peroxidase activity. This Methylacidiphilum infernorum (isolate V4) (Methylokorus infernorum (strain V4)) protein is Catalase-peroxidase.